We begin with the raw amino-acid sequence, 266 residues long: Non-structural maintenance of chromosomes element 1 homolog (266 aa).

An interaction with NSMCE3 region spans residues 1-102 (MQGNTRRTGV…SVSKMASDFA (102 aa)). Residues 191–232 (CNICRSLLIQGQSCETCGIRMHLPCVAKYFQSSSEPHCPHCN) form an RING-type; atypical zinc finger. Residues 243–252 (FDPEKERETG) show a composition bias toward basic and acidic residues. The interval 243 to 266 (FDPEKERETGMSRSNKRPSRSRQH) is disordered. The span at 256–266 (SNKRPSRSRQH) shows a compositional bias: basic residues.

Belongs to the NSE1 family. Component of the SMC5-SMC6 complex which consists at least of SMC5, SMC6, NSMCE2, NSMCE1, NSMCE4A or EID3 and NSMCE3. NSMCE1, NSMCE4A or EID3 and NSMCE3 probably form a subcomplex that bridges the head domains of the SMC5-SMC6 heterodimer. Interacts with NSMCE3. In terms of processing, ubiquitinated.

Its subcellular location is the nucleus. The protein resides in the chromosome. It localises to the telomere. The catalysed reaction is S-ubiquitinyl-[E2 ubiquitin-conjugating enzyme]-L-cysteine + [acceptor protein]-L-lysine = [E2 ubiquitin-conjugating enzyme]-L-cysteine + N(6)-ubiquitinyl-[acceptor protein]-L-lysine.. Functionally, RING-type zinc finger-containing E3 ubiquitin ligase that assembles with melanoma antigen protein (MAGE) to catalyze the direct transfer of ubiquitin from E2 ubiquitin-conjugating enzyme to a specific substrate. Within MAGE-RING ubiquitin ligase complex, MAGE stimulates and specifies ubiquitin ligase activity likely through recruitment and/or stabilization of the E2 ubiquitin-conjugating enzyme at the E3:substrate complex. Involved in maintenance of genome integrity, DNA damage response and DNA repair. NSMCE3/MAGEG1 and NSMCE1 ubiquitin ligase are components of SMC5-SMC6 complex and may positively regulate homologous recombination-mediated DNA repair. In Bos taurus (Bovine), this protein is Non-structural maintenance of chromosomes element 1 homolog (NSMCE1).